The sequence spans 86 residues: Anti-adapter protein IraP (86 aa).

Positions 1 to 36 (MKNLIAELLLKLAQKEEESKELVAQVEALEIIVTAM) form a coiled coil.

This sequence belongs to the IraP family. In terms of assembly, interacts with RssB.

The protein localises to the cytoplasm. Inhibits RpoS proteolysis by regulating RssB activity, thereby increasing the stability of the sigma stress factor RpoS especially during phosphate and magnesium starvation, but also in stationary phase and during nitrogen starvation. Its effect on RpoS stability is due to its interaction with RssB, which probably blocks the interaction of RssB with RpoS, and the consequent delivery of the RssB-RpoS complex to the ClpXP protein degradation pathway. This is Anti-adapter protein IraP from Salmonella choleraesuis (strain SC-B67).